A 265-amino-acid chain; its full sequence is Phosphonates import ATP-binding protein PhnC 1 (265 aa).

The ABC transporter domain occupies 3 to 247 (LRLSGIELRH…HLDTLYANEQ (245 aa)). Residue 36 to 43 (GPSGAGKT) participates in ATP binding. The disordered stretch occupies residues 245 to 265 (NEQLSPQPAPDVSETPWTPRC).

It belongs to the ABC transporter superfamily. Phosphonates importer (TC 3.A.1.9.1) family. In terms of assembly, the complex is composed of two ATP-binding proteins (PhnC), two transmembrane proteins (PhnE) and a solute-binding protein (PhnD).

The protein resides in the cell inner membrane. It carries out the reaction phosphonate(out) + ATP + H2O = phosphonate(in) + ADP + phosphate + H(+). In terms of biological role, part of the ABC transporter complex PhnCDE involved in phosphonates import. Responsible for energy coupling to the transport system. This chain is Phosphonates import ATP-binding protein PhnC 1, found in Pseudomonas savastanoi pv. phaseolicola (strain 1448A / Race 6) (Pseudomonas syringae pv. phaseolicola (strain 1448A / Race 6)).